The sequence spans 461 residues: Photosystem II CP43 reaction center protein (461 aa).

Transmembrane regions (helical) follow at residues 57–81 (LFEV…SHLA), 122–143 (LRGP…KDKN), 166–188 (KAMF…RIIS), 243–263 (KPFG…LSYS), and 279–300 (WYNN…ASQS). Glutamate 355 is a binding site for [CaMn4O5] cluster. The helical transmembrane segment at 435-459 (RARAAAAGFEKGIDRATEPVLAMRD) threads the bilayer.

Belongs to the PsbB/PsbC family. PsbC subfamily. In terms of assembly, PSII is composed of 1 copy each of membrane proteins PsbA, PsbB, PsbC, PsbD, PsbE, PsbF, PsbH, PsbI, PsbJ, PsbK, PsbL, PsbM, PsbT, PsbX, PsbY, PsbZ, Psb30/Ycf12, peripheral proteins PsbO, CyanoQ (PsbQ), PsbU, PsbV and a large number of cofactors. It forms dimeric complexes. The cofactor is Binds multiple chlorophylls and provides some of the ligands for the Ca-4Mn-5O cluster of the oxygen-evolving complex. It may also provide a ligand for a Cl- that is required for oxygen evolution. PSII binds additional chlorophylls, carotenoids and specific lipids..

The protein localises to the cellular thylakoid membrane. Functionally, one of the components of the core complex of photosystem II (PSII). It binds chlorophyll and helps catalyze the primary light-induced photochemical processes of PSII. PSII is a light-driven water:plastoquinone oxidoreductase, using light energy to abstract electrons from H(2)O, generating O(2) and a proton gradient subsequently used for ATP formation. In Synechococcus elongatus (strain ATCC 33912 / PCC 7942 / FACHB-805) (Anacystis nidulans R2), this protein is Photosystem II CP43 reaction center protein.